Consider the following 143-residue polypeptide: Large ribosomal subunit protein uL11 (143 aa).

It belongs to the universal ribosomal protein uL11 family. Part of the ribosomal stalk of the 50S ribosomal subunit. Interacts with L10 and the large rRNA to form the base of the stalk. L10 forms an elongated spine to which L12 dimers bind in a sequential fashion forming a multimeric L10(L12)X complex. Post-translationally, one or more lysine residues are methylated.

Functionally, forms part of the ribosomal stalk which helps the ribosome interact with GTP-bound translation factors. The protein is Large ribosomal subunit protein uL11 of Bordetella pertussis (strain Tohama I / ATCC BAA-589 / NCTC 13251).